Here is a 131-residue protein sequence, read N- to C-terminus: uncharacterized protein (131 aa).

Its subcellular location is the plastid. It is found in the chloroplast. This is an uncharacterized protein from Chlorella vulgaris (Green alga).